The sequence spans 360 residues: Phospho-N-acetylmuramoyl-pentapeptide-transferase (360 aa).

The next 10 helical transmembrane spans lie at 27 to 47 (ILSVLTALFIAFWVGPIMIRM), 73 to 93 (TMGGALILVAIVISTLLWGDL), 97 to 117 (FVWITLGVLFVFGAVGWVDDW), 132 to 152 (WKYLWLSVGALGAGCALFFTA), 164 to 184 (FFKSVAINMGWFYIVLTYFVI), 199 to 219 (GLAIMPTVLVGGALGIFAYAG), 236 to 256 (AGELVIISAALCGAGLGFLWF), 263 to 283 (VFMGDVGALSLGAVLGVMAVI), 288 to 308 (IVLFIMGGVFVMETVSVMLQV), and 337 to 357 (KIIVRFWIITVILVLVGLATL).

It belongs to the glycosyltransferase 4 family. MraY subfamily. Requires Mg(2+) as cofactor.

It is found in the cell inner membrane. It catalyses the reaction UDP-N-acetyl-alpha-D-muramoyl-L-alanyl-gamma-D-glutamyl-meso-2,6-diaminopimeloyl-D-alanyl-D-alanine + di-trans,octa-cis-undecaprenyl phosphate = di-trans,octa-cis-undecaprenyl diphospho-N-acetyl-alpha-D-muramoyl-L-alanyl-D-glutamyl-meso-2,6-diaminopimeloyl-D-alanyl-D-alanine + UMP. It participates in cell wall biogenesis; peptidoglycan biosynthesis. Catalyzes the initial step of the lipid cycle reactions in the biosynthesis of the cell wall peptidoglycan: transfers peptidoglycan precursor phospho-MurNAc-pentapeptide from UDP-MurNAc-pentapeptide onto the lipid carrier undecaprenyl phosphate, yielding undecaprenyl-pyrophosphoryl-MurNAc-pentapeptide, known as lipid I. This chain is Phospho-N-acetylmuramoyl-pentapeptide-transferase, found in Alcanivorax borkumensis (strain ATCC 700651 / DSM 11573 / NCIMB 13689 / SK2).